A 677-amino-acid polypeptide reads, in one-letter code: Transketolase (677 aa).

His-27 is a binding site for substrate. Thiamine diphosphate is bound by residues His-66 and 114 to 116 (GPL). Residue Asp-155 coordinates Mg(2+). Residues Gly-156 and Asn-185 each coordinate thiamine diphosphate. Residues Asn-185 and Ile-187 each coordinate Mg(2+). 3 residues coordinate substrate: His-261, Arg-356, and Ser-383. His-261 lines the thiamine diphosphate pocket. Residues Glu-415 and Phe-442 each coordinate thiamine diphosphate. The Proton donor role is filled by Glu-415. Substrate is bound by residues His-466, Asp-474, and Arg-525.

Belongs to the transketolase family. Homodimer. Mg(2+) is required as a cofactor. Requires Ca(2+) as cofactor. The cofactor is Mn(2+). It depends on Co(2+) as a cofactor. Thiamine diphosphate serves as cofactor.

The enzyme catalyses D-sedoheptulose 7-phosphate + D-glyceraldehyde 3-phosphate = aldehydo-D-ribose 5-phosphate + D-xylulose 5-phosphate. In terms of biological role, catalyzes the transfer of a two-carbon ketol group from a ketose donor to an aldose acceptor, via a covalent intermediate with the cofactor thiamine pyrophosphate. This Scheffersomyces stipitis (strain ATCC 58785 / CBS 6054 / NBRC 10063 / NRRL Y-11545) (Yeast) protein is Transketolase (TKT).